Consider the following 148-residue polypeptide: Protein NrdI (148 aa).

Belongs to the NrdI family.

Probably involved in ribonucleotide reductase function. This Mycolicibacterium gilvum (strain PYR-GCK) (Mycobacterium gilvum (strain PYR-GCK)) protein is Protein NrdI.